Consider the following 488-residue polypeptide: Ribulose bisphosphate carboxylase large chain (488 aa).

Substrate-binding residues include asparagine 127 and threonine 177. Catalysis depends on lysine 179, which acts as the Proton acceptor. Substrate is bound at residue lysine 181. Residues lysine 205, aspartate 207, and glutamate 208 each coordinate Mg(2+). Lysine 205 bears the N6-carboxylysine mark. Histidine 297 acts as the Proton acceptor in catalysis. Substrate contacts are provided by arginine 298, histidine 330, and serine 382.

It belongs to the RuBisCO large chain family. Type I subfamily. Heterohexadecamer of 8 large chains and 8 small chains. It depends on Mg(2+) as a cofactor.

It localises to the plastid. The protein localises to the chloroplast. It catalyses the reaction 2 (2R)-3-phosphoglycerate + 2 H(+) = D-ribulose 1,5-bisphosphate + CO2 + H2O. It carries out the reaction D-ribulose 1,5-bisphosphate + O2 = 2-phosphoglycolate + (2R)-3-phosphoglycerate + 2 H(+). Functionally, ruBisCO catalyzes two reactions: the carboxylation of D-ribulose 1,5-bisphosphate, the primary event in carbon dioxide fixation, as well as the oxidative fragmentation of the pentose substrate in the photorespiration process. Both reactions occur simultaneously and in competition at the same active site. In Chrysotila carterae (Marine alga), this protein is Ribulose bisphosphate carboxylase large chain.